A 766-amino-acid polypeptide reads, in one-letter code: Protein sak1 (766 aa).

A DNA-binding region (RFX-type winged-helix) is located at residues 101–176; it reads GICWLKRACE…YHYCGIKLRG (76 aa). A phosphoserine mark is found at Ser223, Ser224, and Ser227. Disordered regions lie at residues 271–308 and 708–731; these read PQAH…QPTY and LQEH…QQQQ. Residues 279–289 are compositionally biased toward polar residues; the sequence is HLSQSNVPPQL. Low complexity-rich tracts occupy residues 290-308 and 715-731; these read SHSS…QPTY and QQHF…QQQQ.

It belongs to the RFX family.

Its subcellular location is the nucleus. Functionally, positively regulates cyclic AMP-dependent protein kinase-mediated exit from the mitotic cell cycle. This Schizosaccharomyces pombe (strain 972 / ATCC 24843) (Fission yeast) protein is Protein sak1 (sak1).